Consider the following 132-residue polypeptide: Small ribosomal subunit protein uS19 (132 aa).

The protein belongs to the universal ribosomal protein uS19 family.

Protein S19 forms a complex with S13 that binds strongly to the 16S ribosomal RNA. This chain is Small ribosomal subunit protein uS19 (rps19), found in Pyrococcus abyssi (strain GE5 / Orsay).